Consider the following 150-residue polypeptide: Ribosome-binding factor A (150 aa).

The segment at 126–150 (EVARDLSHDDDEDGGADEAPRNGDE) is disordered.

It belongs to the RbfA family. Monomer. Binds 30S ribosomal subunits, but not 50S ribosomal subunits or 70S ribosomes.

It is found in the cytoplasm. In terms of biological role, one of several proteins that assist in the late maturation steps of the functional core of the 30S ribosomal subunit. Associates with free 30S ribosomal subunits (but not with 30S subunits that are part of 70S ribosomes or polysomes). Required for efficient processing of 16S rRNA. May interact with the 5'-terminal helix region of 16S rRNA. In Brucella suis (strain ATCC 23445 / NCTC 10510), this protein is Ribosome-binding factor A.